We begin with the raw amino-acid sequence, 176 residues long: Peptidyl-prolyl cis-trans isomerase cyp5 (176 aa).

One can recognise a PPIase cyclophilin-type domain in the interval 10 to 173; that stretch reads FFDVAVNGKP…AKVEIVDCGE (164 aa).

It belongs to the cyclophilin-type PPIase family.

It carries out the reaction [protein]-peptidylproline (omega=180) = [protein]-peptidylproline (omega=0). PPIases accelerate the folding of proteins. It catalyzes the cis-trans isomerization of proline imidic peptide bonds in oligopeptides. This chain is Peptidyl-prolyl cis-trans isomerase cyp5 (cyp5), found in Rhizopus delemar (strain RA 99-880 / ATCC MYA-4621 / FGSC 9543 / NRRL 43880) (Mucormycosis agent).